Reading from the N-terminus, the 901-residue chain is HTH-type transcriptional regulator MalT (901 aa).

39–46 contributes to the ATP binding site; it reads SPAGYGKT. Positions 829–894 constitute an HTH luxR-type domain; the sequence is ELIRTSPLTQ…DAVQHAQQLL (66 aa). Residues 853–872 constitute a DNA-binding region (H-T-H motif); the sequence is NEQIAGELAVAATTIKTHIR.

The protein belongs to the MalT family. Monomer in solution. Oligomerizes to an active state in the presence of the positive effectors ATP and maltotriose.

Its activity is regulated as follows. Activated by ATP and maltotriose, which are both required for DNA binding. Positively regulates the transcription of the maltose regulon whose gene products are responsible for uptake and catabolism of malto-oligosaccharides. Specifically binds to the promoter region of its target genes, recognizing a short DNA motif called the MalT box. The sequence is that of HTH-type transcriptional regulator MalT from Salmonella gallinarum (strain 287/91 / NCTC 13346).